Reading from the N-terminus, the 449-residue chain is Tubulin beta-7 chain (449 aa).

8 residues coordinate GTP: Q11, E69, S138, G142, T143, G144, N204, and N226. E69 serves as a coordination point for Mg(2+). The interval Y422–Y449 is disordered. The segment covering T429–Y449 has biased composition (acidic residues).

This sequence belongs to the tubulin family. As to quaternary structure, dimer of alpha and beta chains. A typical microtubule is a hollow water-filled tube with an outer diameter of 25 nm and an inner diameter of 15 nM. Alpha-beta heterodimers associate head-to-tail to form protofilaments running lengthwise along the microtubule wall with the beta-tubulin subunit facing the microtubule plus end conferring a structural polarity. Microtubules usually have 13 protofilaments but different protofilament numbers can be found in some organisms and specialized cells. The cofactor is Mg(2+).

Its subcellular location is the cytoplasm. The protein localises to the cytoskeleton. Functionally, tubulin is the major constituent of microtubules, a cylinder consisting of laterally associated linear protofilaments composed of alpha- and beta-tubulin heterodimers. Microtubules grow by the addition of GTP-tubulin dimers to the microtubule end, where a stabilizing cap forms. Below the cap, tubulin dimers are in GDP-bound state, owing to GTPase activity of alpha-tubulin. The chain is Tubulin beta-7 chain (TUBB7) from Arabidopsis thaliana (Mouse-ear cress).